Reading from the N-terminus, the 526-residue chain is Variant surface glycoprotein MITAT 1.4A (526 aa).

The N-terminal stretch at 1–33 (MDCHTKETLGVTQWRRSTMLTLSLLYAITPADG) is a signal peptide. Intrachain disulfides connect cysteine 47–cysteine 173 and cysteine 154–cysteine 215. The segment at 157 to 193 (NEGGDGDGKDQLAPKGCRHGTEADFDAGAGPAESEVA) is disordered. N-linked (GlcNAc...) asparagine glycosylation is present at asparagine 453. Aspartate 503 carries GPI-anchor amidated aspartate lipidation. Positions 504 to 526 (SSILVTKKFALTVVSAAFVALLF) are cleaved as a propeptide — removed in mature form.

It localises to the cell membrane. Its function is as follows. VSG forms a coat on the surface of the parasite. The trypanosome evades the immune response of the host by expressing a series of antigenically distinct VSGs from an estimated 1000 VSG genes. In Trypanosoma brucei brucei, this protein is Variant surface glycoprotein MITAT 1.4A.